A 277-amino-acid chain; its full sequence is Probable septum site-determining protein MinC (277 aa).

The disordered stretch occupies residues 137–164; sequence ATTGNAPAEPAPAEPAAPAAAPQPPAVP. Residues 145–164 are compositionally biased toward pro residues; sequence EPAPAEPAAPAAAPQPPAVP.

It belongs to the MinC family. As to quaternary structure, interacts with MinD and FtsZ.

Cell division inhibitor that blocks the formation of polar Z ring septums. Rapidly oscillates between the poles of the cell to destabilize FtsZ filaments that have formed before they mature into polar Z rings. Prevents FtsZ polymerization. The sequence is that of Probable septum site-determining protein MinC from Bordetella petrii (strain ATCC BAA-461 / DSM 12804 / CCUG 43448).